Consider the following 92-residue polypeptide: Co-chaperonin GroES (92 aa).

This sequence belongs to the GroES chaperonin family. Heptamer of 7 subunits arranged in a ring. Interacts with the chaperonin GroEL.

It localises to the cytoplasm. Its function is as follows. Together with the chaperonin GroEL, plays an essential role in assisting protein folding. The GroEL-GroES system forms a nano-cage that allows encapsulation of the non-native substrate proteins and provides a physical environment optimized to promote and accelerate protein folding. GroES binds to the apical surface of the GroEL ring, thereby capping the opening of the GroEL channel. The chain is Co-chaperonin GroES from Methanosarcina mazei (strain ATCC BAA-159 / DSM 3647 / Goe1 / Go1 / JCM 11833 / OCM 88) (Methanosarcina frisia).